The following is a 178-amino-acid chain: Enhancer of split m5 protein (178 aa).

A bHLH domain is found at 18 to 73 (YLKVKKPLLERQRRARMNKCLDTLKTLVAEFQGDDAILRMDKAEMLEAALVFMRKQ). The Orange domain maps to 89–122 (FKNGYMNAVSEISRVMACTPAMSVDVGKTVMTHL). Residues 135-165 (VQTSVTTSTPRPLSPASSGYHSDNEDSQSAA) show a composition bias toward polar residues. A disordered region spans residues 135-178 (VQTSVTTSTPRPLSPASSGYHSDNEDSQSAASPKPVEETMWRPW). The segment covering 169–178 (PVEETMWRPW) has biased composition (basic and acidic residues). Positions 175-178 (WRPW) match the WRPW motif motif.

As to quaternary structure, transcription repression requires formation of a complex with a corepressor protein (Groucho). Forms homodimers.

The protein resides in the nucleus. Its function is as follows. Participates in the control of cell fate choice by uncommitted neuroectodermal cells in the embryo. Transcriptional repressor. Binds DNA on N-box motifs: 5'-CACNAG-3'. This is Enhancer of split m5 protein from Drosophila melanogaster (Fruit fly).